A 255-amino-acid chain; its full sequence is Geranylgeranylglyceryl phosphate synthase (255 aa).

Residues Asp-31 and Ser-60 each coordinate Mg(2+). Residues 179-185 (YLEAGSG), 211-212 (GG), and 233-234 (GT) contribute to the sn-glycerol 1-phosphate site.

It belongs to the GGGP/HepGP synthase family. Group II subfamily. It depends on Mg(2+) as a cofactor.

The protein resides in the cytoplasm. The catalysed reaction is sn-glycerol 1-phosphate + (2E,6E,10E)-geranylgeranyl diphosphate = sn-3-O-(geranylgeranyl)glycerol 1-phosphate + diphosphate. The protein operates within membrane lipid metabolism; glycerophospholipid metabolism. Functionally, prenyltransferase that catalyzes the transfer of the geranylgeranyl moiety of geranylgeranyl diphosphate (GGPP) to the C3 hydroxyl of sn-glycerol-1-phosphate (G1P). This reaction is the first ether-bond-formation step in the biosynthesis of archaeal membrane lipids. The protein is Geranylgeranylglyceryl phosphate synthase of Methanothrix thermoacetophila (strain DSM 6194 / JCM 14653 / NBRC 101360 / PT) (Methanosaeta thermophila).